We begin with the raw amino-acid sequence, 347 residues long: NADH-quinone oxidoreductase subunit H (347 aa).

The next 8 membrane-spanning stretches (helical) occupy residues 13-33 (LIMI…IAYI), 82-102 (AVFL…WAVV), 115-135 (VGIL…IMGG), 161-181 (IGLV…TDIV), 198-218 (FLDW…ISAL), 258-278 (AVVL…LPPV), 286-306 (VPGI…FAMV), and 321-341 (LGWK…AFVL).

This sequence belongs to the complex I subunit 1 family. In terms of assembly, NDH-1 is composed of 14 different subunits. Subunits NuoA, H, J, K, L, M, N constitute the membrane sector of the complex.

It is found in the cell inner membrane. The catalysed reaction is a quinone + NADH + 5 H(+)(in) = a quinol + NAD(+) + 4 H(+)(out). Functionally, NDH-1 shuttles electrons from NADH, via FMN and iron-sulfur (Fe-S) centers, to quinones in the respiratory chain. The immediate electron acceptor for the enzyme in this species is believed to be ubiquinone. Couples the redox reaction to proton translocation (for every two electrons transferred, four hydrogen ions are translocated across the cytoplasmic membrane), and thus conserves the redox energy in a proton gradient. This subunit may bind ubiquinone. The polypeptide is NADH-quinone oxidoreductase subunit H (Rhizobium rhizogenes (strain K84 / ATCC BAA-868) (Agrobacterium radiobacter)).